Here is a 429-residue protein sequence, read N- to C-terminus: MSRSSDLFHKAQTIIPGGVNSPVRAFKGVGGEPVFFKSGKGAYLTDVDDKQYIDYVGSWGPLILGHCHPKVIEAVDNVLHSGMSFGAPTELEIQLAEKIASLMPSIEKIRMVNSGTEATMTAIRLARGFTNKNKFIKFNGCYHGHSDSLLVKAGSGLLTLGIPSTPGIPQCITEHTLTADFNNLEQVAQLFEKYPNDIATVILEPVPGNMGFILPKIEFLKGLRELCDQYNALLIFDEVMTGFRVGLHGAQGLFGIKPDITTLGKIIGGGMPVGALGGKREIMSFLAPEGPVYQAGTLSGNPLAMAAGLATLKEIEKINFFEDLSSTTNKLTEALSDAAENANIPLFAASLGGMFGFCFTDKNSVENYLDVASSDEVLFKKFFHAMLAQGVYFAPSMYEAGFVSSMHGDLEIQKTYDAAELVLNQLKSA.

K265 bears the N6-(pyridoxal phosphate)lysine mark.

Belongs to the class-III pyridoxal-phosphate-dependent aminotransferase family. HemL subfamily. Homodimer. Pyridoxal 5'-phosphate is required as a cofactor.

It is found in the cytoplasm. The enzyme catalyses (S)-4-amino-5-oxopentanoate = 5-aminolevulinate. It participates in porphyrin-containing compound metabolism; protoporphyrin-IX biosynthesis; 5-aminolevulinate from L-glutamyl-tRNA(Glu): step 2/2. This chain is Glutamate-1-semialdehyde 2,1-aminomutase, found in Legionella pneumophila (strain Lens).